We begin with the raw amino-acid sequence, 685 residues long: Polyphosphate kinase (685 aa).

Position 45 (N45) interacts with ATP. Mg(2+) contacts are provided by R375 and R405. The Phosphohistidine intermediate role is filled by H435. ATP-binding residues include Y468, R564, and H592.

The protein belongs to the polyphosphate kinase 1 (PPK1) family. Requires Mg(2+) as cofactor. Post-translationally, an intermediate of this reaction is the autophosphorylated ppk in which a phosphate is covalently linked to a histidine residue through a N-P bond.

The enzyme catalyses [phosphate](n) + ATP = [phosphate](n+1) + ADP. Its function is as follows. Catalyzes the reversible transfer of the terminal phosphate of ATP to form a long-chain polyphosphate (polyP). This is Polyphosphate kinase from Neisseria meningitidis serogroup B (strain ATCC BAA-335 / MC58).